We begin with the raw amino-acid sequence, 331 residues long: Phosphoribosylformylglycinamidine cyclo-ligase (331 aa).

The protein belongs to the AIR synthase family.

It localises to the cytoplasm. The enzyme catalyses 2-formamido-N(1)-(5-O-phospho-beta-D-ribosyl)acetamidine + ATP = 5-amino-1-(5-phospho-beta-D-ribosyl)imidazole + ADP + phosphate + H(+). It functions in the pathway purine metabolism; IMP biosynthesis via de novo pathway; 5-amino-1-(5-phospho-D-ribosyl)imidazole from N(2)-formyl-N(1)-(5-phospho-D-ribosyl)glycinamide: step 2/2. This chain is Phosphoribosylformylglycinamidine cyclo-ligase, found in Clostridium botulinum (strain Okra / Type B1).